We begin with the raw amino-acid sequence, 912 residues long: Protein translocase subunit SecA (912 aa).

Residues Q87, 105–109 (GEGKT), and D499 each bind ATP. Residues C897, C899, C908, and H909 each coordinate Zn(2+).

It belongs to the SecA family. In terms of assembly, monomer and homodimer. Part of the essential Sec protein translocation apparatus which comprises SecA, SecYEG and auxiliary proteins SecDF-YajC and YidC. Zn(2+) is required as a cofactor.

Its subcellular location is the cell inner membrane. The protein resides in the cytoplasm. It carries out the reaction ATP + H2O + cellular proteinSide 1 = ADP + phosphate + cellular proteinSide 2.. Its function is as follows. Part of the Sec protein translocase complex. Interacts with the SecYEG preprotein conducting channel. Has a central role in coupling the hydrolysis of ATP to the transfer of proteins into and across the cell membrane, serving both as a receptor for the preprotein-SecB complex and as an ATP-driven molecular motor driving the stepwise translocation of polypeptide chains across the membrane. The protein is Protein translocase subunit SecA of Rhizorhabdus wittichii (strain DSM 6014 / CCUG 31198 / JCM 15750 / NBRC 105917 / EY 4224 / RW1) (Sphingomonas wittichii).